We begin with the raw amino-acid sequence, 122 residues long: Large ribosomal subunit protein uL14 (122 aa).

It belongs to the universal ribosomal protein uL14 family. In terms of assembly, part of the 50S ribosomal subunit. Forms a cluster with proteins L3 and L19. In the 70S ribosome, L14 and L19 interact and together make contacts with the 16S rRNA in bridges B5 and B8.

Binds to 23S rRNA. Forms part of two intersubunit bridges in the 70S ribosome. The protein is Large ribosomal subunit protein uL14 of Polynucleobacter asymbioticus (strain DSM 18221 / CIP 109841 / QLW-P1DMWA-1) (Polynucleobacter necessarius subsp. asymbioticus).